The following is a 417-amino-acid chain: Serine hydroxymethyltransferase (417 aa).

(6S)-5,6,7,8-tetrahydrofolate contacts are provided by residues Leu-121 and 125–127; that span reads GHL. At Lys-229 the chain carries N6-(pyridoxal phosphate)lysine. 355-357 lines the (6S)-5,6,7,8-tetrahydrofolate pocket; it reads SPF.

This sequence belongs to the SHMT family. Homodimer. Requires pyridoxal 5'-phosphate as cofactor.

Its subcellular location is the cytoplasm. It carries out the reaction (6R)-5,10-methylene-5,6,7,8-tetrahydrofolate + glycine + H2O = (6S)-5,6,7,8-tetrahydrofolate + L-serine. It participates in one-carbon metabolism; tetrahydrofolate interconversion. It functions in the pathway amino-acid biosynthesis; glycine biosynthesis; glycine from L-serine: step 1/1. In terms of biological role, catalyzes the reversible interconversion of serine and glycine with tetrahydrofolate (THF) serving as the one-carbon carrier. This reaction serves as the major source of one-carbon groups required for the biosynthesis of purines, thymidylate, methionine, and other important biomolecules. Also exhibits THF-independent aldolase activity toward beta-hydroxyamino acids, producing glycine and aldehydes, via a retro-aldol mechanism. The protein is Serine hydroxymethyltransferase of Buchnera aphidicola subsp. Schizaphis graminum (strain Sg).